Reading from the N-terminus, the 932-residue chain is MAVVIRLQGLPIVAGTMDIRHFFSGLTIPDGGVHIVGGELGEAFIVFATDEDARLGMMRTGGTIKGSKVTLLLSSKTEMQNMIELSRRRFETANLDIPPANASRSGPPPSSGMSGRVNLPTTVSNFNNPSPSVVTATTSVHESNKNIQTFSTASIGTAPPNMGASFGSPTFSSTVPSTASPMNTVPPPPIPPIPAMPSLPPMPSIPPIPVPPPVPTLPPVPPVPPIPPVPSVPPMTPLPPMSGMPPLNPPPVAPLPAGMNGSGAPMNLNNNLNPMFLGPLNPVNPIQMNSQSSVKPLPINPDDLYVSVHGMPFSAMENDVRDFFHGLRVDAVHLLKDHVGRNNGNGLVKFLSPQDTFEALKRNRMLMIQRYVEVSPATERQWVAAGGHITFKQNMGPSGQSHPPPQTLPRSKSPSGQKRSRSRSPHEAGFCVYLKGLPFEAENKHVIDFFKKLDIVEDSIYIAYGPNGKATGEGFVEFRNEADYKAALCRHKQYMGNRFIQVHPITKKGMLEKIDMIRKRLQNFSYDQREMMLNPEGDVNSAKVCAHITNIPFSITKMDVLQFLEGIPVDENAVHVLVDNNGQGLGQALVQFKNEDDARKSERLHRKKLNGREAFVHVVTLEDMREIEKNPPAQGKKGLKMPVPGNPAVPGMPNAGLPGVGLPSAGLPGAGLPSTGLPGSAITSAGLPGAGMPSAGIPSAGGEEHAFLTVGSKEANNGPPFNFPGNFGGSNAFGPPIPPPGLGGGAFGDARPGMPSVGNSGLPGLGLDVPGFGGGPNNLSGPSGFGGGPQNFGNGPGSLGGPPGFGSGPPGLGSAPGHLGGPPAFGPGPGPGPGPGPIHIGGPPGFASSSGKPGPTVIKVQNMPFTVSIDEILDFFYGYQVIPGSVCLKYNEKGMPTGEAMVAFESRDEATAAVIDLNDRPIGSRKVKLVLG.

The segment at 97 to 116 (IPPANASRSGPPPSSGMSGR) is disordered. The span at 98 to 116 (PPANASRSGPPPSSGMSGR) shows a compositional bias: low complexity. The region spanning 304–379 (LYVSVHGMPF…RYVEVSPATE (76 aa)) is the RRM 1 domain. Ser-352 and Ser-375 each carry phosphoserine. Residues 393 to 424 (QNMGPSGQSHPPPQTLPRSKSPSGQKRSRSRS) form a disordered region. Positions 408 to 417 (LPRSKSPSGQ) are enriched in polar residues. Residues Ser-420, Ser-422, and Ser-424 each carry the phosphoserine modification. The 78-residue stretch at 430–507 (FCVYLKGLPF…RFIQVHPITK (78 aa)) folds into the RRM 2 domain. Phosphoserine is present on Ser-525. The segment covering 717–734 (NGPPFNFPGNFGGSNAFG) has biased composition (low complexity). Residues 717 to 853 (NGPPFNFPGN…PGFASSSGKP (137 aa)) form a disordered region. Gly residues predominate over residues 783–811 (SGFGGGPQNFGNGPGSLGGPPGFGSGPPG). Pro residues predominate over residues 824–836 (AFGPGPGPGPGPG). The RRM 3 domain maps to 856-932 (TVIKVQNMPF…GSRKVKLVLG (77 aa)).

Its subcellular location is the nucleus. The chain is RNA-binding protein 12 (RBM12) from Macaca mulatta (Rhesus macaque).